We begin with the raw amino-acid sequence, 103 residues long: Large ribosomal subunit protein bL21 (103 aa).

Belongs to the bacterial ribosomal protein bL21 family. In terms of assembly, part of the 50S ribosomal subunit. Contacts protein L20.

Functionally, this protein binds to 23S rRNA in the presence of protein L20. This chain is Large ribosomal subunit protein bL21, found in Haemophilus influenzae (strain 86-028NP).